Consider the following 154-residue polypeptide: Fibroblast growth factor 2 (154 aa).

Positions 1-9 (MAAGSITSL) are excised as a propeptide. Positions 1–20 (MAAGSITSLPALPEDGGGAF) are disordered. Asn-35 is a heparin binding site. Residue Tyr-81 is modified to Phosphotyrosine; by TEC. Lys-94 is covalently cross-linked (Glycyl lysine isopeptide (Lys-Gly) (interchain with G-Cter in SUMO1)). The heparin-binding stretch occupies residues 127–143 (KRTGQYKLGSKTGPGQK).

This sequence belongs to the heparin-binding growth factors family. Monomer. Homodimer. Interacts with FGFR1, FGFR2, FGFR3 and FGFR4. Affinity between fibroblast growth factors (FGFs) and their receptors is increased by heparan sulfate glycosaminoglycans that function as coreceptors. Interacts with CSPG4, FGFBP1 and TEC. Found in a complex with FGFBP1, FGF1 and FGF2. Interacts with FGFBP3. Interacts with integrin ITGAV:ITGB3; the interaction is required for FGF2 signaling. Interacts with SNORC (via the extracellular domain). Interacts with GPC3. Phosphorylation at Tyr-81 regulates FGF2 unconventional secretion. As to expression, found in all tissues examined.

The protein localises to the secreted. It is found in the nucleus. Acts as a ligand for FGFR1, FGFR2, FGFR3 and FGFR4. Also acts as an integrin ligand which is required for FGF2 signaling. Binds to integrin ITGAV:ITGB3. Plays an important role in the regulation of cell survival, cell division, cell differentiation and cell migration. Functions as a potent mitogen in vitro. Can induce angiogenesis. Mediates phosphorylation of ERK1/2 and thereby promotes retinal lens fiber differentiation. The chain is Fibroblast growth factor 2 (Fgf2) from Rattus norvegicus (Rat).